Here is a 360-residue protein sequence, read N- to C-terminus: Dynein intermediate light chain dil1 (360 aa).

This sequence belongs to the dynein light intermediate chain DYN3 family. As to quaternary structure, the dynein complex consists of at least two heavy chains and a number of intermediate and light chains. Interacts with rga3, sec10, sec16, syp1, rvb2, spbc19c7.04c, spbc2f12.05 and spac3a11.10c. The N-terminal part is acetylated.

It is found in the cytoplasm. It localises to the cytoskeleton. Functionally, component of the cytoplasmic dynein which acts as a motor for the intracellular retrograde motility of vesicles and organelles along microtubules. Promotes oscillatory nuclear movement and efficient pairing of homologous centromeres during meiotic prophase. The chain is Dynein intermediate light chain dil1 (dil1) from Schizosaccharomyces pombe (strain 972 / ATCC 24843) (Fission yeast).